The sequence spans 120 residues: NAD(P)H-quinone oxidoreductase subunit 3 (120 aa).

The next 3 helical transmembrane spans lie at 6–26 (GYDA…LALV), 64–84 (MFAL…PWAV), and 89–109 (LGLL…VALA).

Belongs to the complex I subunit 3 family. As to quaternary structure, NDH-1 can be composed of about 15 different subunits; different subcomplexes with different compositions have been identified which probably have different functions.

The protein resides in the cellular thylakoid membrane. The catalysed reaction is a plastoquinone + NADH + (n+1) H(+)(in) = a plastoquinol + NAD(+) + n H(+)(out). The enzyme catalyses a plastoquinone + NADPH + (n+1) H(+)(in) = a plastoquinol + NADP(+) + n H(+)(out). Its function is as follows. NDH-1 shuttles electrons from an unknown electron donor, via FMN and iron-sulfur (Fe-S) centers, to quinones in the respiratory and/or the photosynthetic chain. The immediate electron acceptor for the enzyme in this species is believed to be plastoquinone. Couples the redox reaction to proton translocation, and thus conserves the redox energy in a proton gradient. Cyanobacterial NDH-1 also plays a role in inorganic carbon-concentration. The sequence is that of NAD(P)H-quinone oxidoreductase subunit 3 from Synechococcus sp. (strain CC9605).